Consider the following 420-residue polypeptide: MCCFLLVSVLLATTLTDVASAQRWRQTSGGGKDRWDGLLDPLDADLRRDIIRYGELAQATSDALIGDPASPFAGASRYAPDAFLRKVRASDPDAYRVTRFVYATSSVRLPDAFMPRPAPSAGAAWSGESNWMGYVAVAADGVAAKAGRRDIVVAWRGTKRAVEWANDLDITLVPADGVVGPGPGWTQPSVHRGFLSVYTSKSFSSPFNKLSAREQVLAEITRLLRAYKNENCSITITGHSLGAALSTLNAIDIVANGYNVRGSSRVPVPVTAIALASPRVGDDQFKRAFDSTSNLSLLRVRNAPDIVPTILPSAFFKDVGAELLVDTRRSPYLKNPAGPAQWHNLECYLHAVAGTQGAGDGAGFSLVVDRDLALVNKEVDALRDEYQVPAAWWVEKNKGMVQNASGRWVLQDHEEGNLAM.

An N-terminal signal peptide occupies residues 1-21; that stretch reads MCCFLLVSVLLATTLTDVASA. Asn231 carries N-linked (GlcNAc...) asparagine glycosylation. The active-site Acyl-ester intermediate is Ser240. Catalysis depends on Ser240, which acts as the Charge relay system. N-linked (GlcNAc...) asparagine glycosylation is present at Asn294. Catalysis depends on charge relay system residues Asp305 and His343. Residues 367–388 are a coiled coil; sequence VVDRDLALVNKEVDALRDEYQV. A glycan (N-linked (GlcNAc...) asparagine) is linked at Asn403.

This sequence belongs to the AB hydrolase superfamily. Lipase family.

It localises to the secreted. Functionally, acylhydrolase that catalyzes the hydrolysis of phospholipids at the sn-1 position. The sequence is that of Phospholipase A1-II 3 from Oryza sativa subsp. japonica (Rice).